A 122-amino-acid chain; its full sequence is Small ribosomal subunit protein uS13 (122 aa).

Residues 98–122 (VRGQRTHTNARTRKGPAKAIAGKKK) form a disordered region.

It belongs to the universal ribosomal protein uS13 family. Part of the 30S ribosomal subunit. Forms a loose heterodimer with protein S19. Forms two bridges to the 50S subunit in the 70S ribosome.

Located at the top of the head of the 30S subunit, it contacts several helices of the 16S rRNA. In the 70S ribosome it contacts the 23S rRNA (bridge B1a) and protein L5 of the 50S subunit (bridge B1b), connecting the 2 subunits; these bridges are implicated in subunit movement. Contacts the tRNAs in the A and P-sites. In Ruegeria pomeroyi (strain ATCC 700808 / DSM 15171 / DSS-3) (Silicibacter pomeroyi), this protein is Small ribosomal subunit protein uS13.